A 471-amino-acid chain; its full sequence is Indole-3-acetate beta-glucosyltransferase (471 aa).

The active-site Proton acceptor is His15. An anthocyanidin is bound at residue His15. The Charge relay role is filled by Asp107. UDP-alpha-D-glucose-binding residues include Thr129, Gln344, His359, Trp362, Asn363, Ser364, Glu367, Asp383, and Gln384.

It belongs to the UDP-glycosyltransferase family.

The enzyme catalyses (indol-3-yl)acetate + UDP-alpha-D-glucose = 1-O-(indol-3-ylacetyl)-beta-D-glucose + UDP. It functions in the pathway plant hormone metabolism; auxin conjugation. The protein is Indole-3-acetate beta-glucosyltransferase (IAGLU) of Zea mays (Maize).